A 338-amino-acid polypeptide reads, in one-letter code: MNAVWTDNDTQAEDLSPQGRVASQLVRLKSDLQAFADATASAPATREPKIERETHKLEKRLCRQVGQAIMDFNMIEEGDRVMVCVSGGKDSYGLLDILLKMQQRAPINFEIVAVNLDQKQPGFPAHILPEYLAKLGIEFHIETQDTYSIVKKVIPEGKTMCSLCSRLRRGILYRVADELKITKIALGHHRDDMLQTFFLNMFFGGKLKGMPPKLVSDDGGHIVIRPLANVAEKDLTRWAAHRQFPIIPCSLCGSQENLQRQLIGQMLRDWEKQYPGRTETMFTALQNVVPSHLMDATRYDFKGLKITGVPDADGDRVFDEETFPMAKLAGVQVLGSSC.

The short motif at Ser86–Ser91 is the PP-loop motif element. Cys161, Cys164, and Cys252 together coordinate [4Fe-4S] cluster.

Belongs to the TtcA family. Homodimer. It depends on Mg(2+) as a cofactor. The cofactor is [4Fe-4S] cluster.

It localises to the cytoplasm. The enzyme catalyses cytidine(32) in tRNA + S-sulfanyl-L-cysteinyl-[cysteine desulfurase] + AH2 + ATP = 2-thiocytidine(32) in tRNA + L-cysteinyl-[cysteine desulfurase] + A + AMP + diphosphate + H(+). Its pathway is tRNA modification. Catalyzes the ATP-dependent 2-thiolation of cytidine in position 32 of tRNA, to form 2-thiocytidine (s(2)C32). The sulfur atoms are provided by the cysteine/cysteine desulfurase (IscS) system. In Albidiferax ferrireducens (strain ATCC BAA-621 / DSM 15236 / T118) (Rhodoferax ferrireducens), this protein is tRNA-cytidine(32) 2-sulfurtransferase.